A 350-amino-acid chain; its full sequence is 4-hydroxy-2-oxovalerate aldolase 2 (350 aa).

The 253-residue stretch at Ile8–Gln260 folds into the Pyruvate carboxyltransferase domain. Arg16–Asp17 is a substrate binding site. Asp17 serves as a coordination point for Mn(2+). Residue His20 is the Proton acceptor of the active site. Substrate contacts are provided by Ser170 and His199. 2 residues coordinate Mn(2+): His199 and His201. Tyr290 contacts substrate.

Belongs to the 4-hydroxy-2-oxovalerate aldolase family.

It catalyses the reaction (S)-4-hydroxy-2-oxopentanoate = acetaldehyde + pyruvate. This Comamonas testosteroni (Pseudomonas testosteroni) protein is 4-hydroxy-2-oxovalerate aldolase 2 (tesG).